The chain runs to 124 residues: uncharacterized protein (124 aa).

A helical membrane pass occupies residues 2 to 22 (AIIIAIIAAVIVIAALITFNV). The tract at residues 24–124 (NASPGPEKQE…ALLSMKNKKK (101 aa)) is disordered. Basic and acidic residues-rich tracts occupy residues 30-58 (EKQEATDRIAPPEEEKNEAHYPAEARAAE), 67-81 (DSPKEKRDTMGDDIY), and 89-113 (KHSDEVHAEEEVTEESDKMQDRSYR).

It is found in the membrane. This is an uncharacterized protein from Bacillus subtilis (strain 168).